We begin with the raw amino-acid sequence, 316 residues long: HTH-type transcriptional regulator cbl (316 aa).

In terms of domain architecture, HTH lysR-type spans 1-59 (MNFQQLKIIREAARQDYNLTEVANMLFTSQSGVSRHIRELEDELGIEIFVRRGKRLLGM). A DNA-binding region (H-T-H motif) is located at residues 19–38 (LTEVANMLFTSQSGVSRHIR).

This sequence belongs to the LysR transcriptional regulatory family.

May be an accessory regulatory protein within the cys regulon. The sequence is that of HTH-type transcriptional regulator cbl (cbl) from Escherichia coli (strain K12).